A 288-amino-acid polypeptide reads, in one-letter code: Nucleotide-binding protein Mlg_2233 (288 aa).

11 to 18 (GLSGSGKS) serves as a coordination point for ATP. Residue 63–66 (DARN) participates in GTP binding.

This sequence belongs to the RapZ-like family.

Functionally, displays ATPase and GTPase activities. This chain is Nucleotide-binding protein Mlg_2233, found in Alkalilimnicola ehrlichii (strain ATCC BAA-1101 / DSM 17681 / MLHE-1).